A 281-amino-acid chain; its full sequence is ATP phosphoribosyltransferase (281 aa).

This sequence belongs to the ATP phosphoribosyltransferase family. Long subfamily. The cofactor is Mg(2+).

It localises to the cytoplasm. It catalyses the reaction 1-(5-phospho-beta-D-ribosyl)-ATP + diphosphate = 5-phospho-alpha-D-ribose 1-diphosphate + ATP. Its pathway is amino-acid biosynthesis; L-histidine biosynthesis; L-histidine from 5-phospho-alpha-D-ribose 1-diphosphate: step 1/9. Its activity is regulated as follows. Feedback inhibited by histidine. Functionally, catalyzes the condensation of ATP and 5-phosphoribose 1-diphosphate to form N'-(5'-phosphoribosyl)-ATP (PR-ATP). Has a crucial role in the pathway because the rate of histidine biosynthesis seems to be controlled primarily by regulation of HisG enzymatic activity. In Kocuria rhizophila (strain ATCC 9341 / DSM 348 / NBRC 103217 / DC2201), this protein is ATP phosphoribosyltransferase.